A 241-amino-acid polypeptide reads, in one-letter code: Probable transcriptional regulatory protein RSc2190 (241 aa).

This sequence belongs to the TACO1 family.

The protein localises to the cytoplasm. The polypeptide is Probable transcriptional regulatory protein RSc2190 (Ralstonia nicotianae (strain ATCC BAA-1114 / GMI1000) (Ralstonia solanacearum)).